The chain runs to 266 residues: MAKSLFRALVALSFLAPLWLNAAPRVITLSPANTELAFAAGITPVGVSSYSDYPPQAQKIEQVSTWQGMNLERIVALKPDLVIAWRGGNAERQVDQLASLGIKVMWVDATSIEQIANALRQLAPWSPQPDKAEQAAQSLLDQYVQLKAQYADKPKKRVFLQFGINPPFTSGKESIQNQVLEVCGGENIFKDSRVPWPQVSREQVLARSPQAIVITGGPDQIPKIKQYWGEQLKIPVIPLTSDWFERASPRIILAAQQLCNALSQVD.

The N-terminal stretch at 1 to 22 is a signal peptide; it reads MAKSLFRALVALSFLAPLWLNA. The Fe/B12 periplasmic-binding domain occupies 25 to 266; the sequence is RVITLSPANT…QLCNALSQVD (242 aa). Residues Tyr50 and 242-246 contribute to the cyanocob(III)alamin site; that span reads DWFER. Cys183 and Cys259 are joined by a disulfide.

The protein belongs to the BtuF family. As to quaternary structure, the complex is composed of two ATP-binding proteins (BtuD), two transmembrane proteins (BtuC) and a solute-binding protein (BtuF).

It is found in the periplasm. In terms of biological role, part of the ABC transporter complex BtuCDF involved in vitamin B12 import. Binds vitamin B12 and delivers it to the periplasmic surface of BtuC. The polypeptide is Vitamin B12-binding protein (Shigella flexneri).